Here is a 509-residue protein sequence, read N- to C-terminus: BPI fold-containing family C protein (509 aa).

Positions 1–23 (MRTKQVPVLWACFLLWSLYIASS) are cleaved as a signal peptide. 5 N-linked (GlcNAc...) asparagine glycosylation sites follow: Asn63, Asn79, Asn92, Asn113, and Asn117. A disulfide bridge connects residues Cys161 and Cys202. 5 N-linked (GlcNAc...) asparagine glycosylation sites follow: Asn215, Asn227, Asn357, Asn374, and Asn457.

This sequence belongs to the BPI/LBP/Plunc superfamily. BPI/LBP family.

It is found in the secreted. The protein is BPI fold-containing family C protein (Bpifc) of Mus musculus (Mouse).